Consider the following 258-residue polypeptide: Acyl-[acyl-carrier-protein]--UDP-N-acetylglucosamine O-acyltransferase (258 aa).

Belongs to the transferase hexapeptide repeat family. LpxA subfamily. Homotrimer.

It is found in the cytoplasm. The catalysed reaction is a (3R)-hydroxyacyl-[ACP] + UDP-N-acetyl-alpha-D-glucosamine = a UDP-3-O-[(3R)-3-hydroxyacyl]-N-acetyl-alpha-D-glucosamine + holo-[ACP]. The protein operates within glycolipid biosynthesis; lipid IV(A) biosynthesis; lipid IV(A) from (3R)-3-hydroxytetradecanoyl-[acyl-carrier-protein] and UDP-N-acetyl-alpha-D-glucosamine: step 1/6. In terms of biological role, involved in the biosynthesis of lipid A, a phosphorylated glycolipid that anchors the lipopolysaccharide to the outer membrane of the cell. This is Acyl-[acyl-carrier-protein]--UDP-N-acetylglucosamine O-acyltransferase from Pseudomonas savastanoi pv. phaseolicola (strain 1448A / Race 6) (Pseudomonas syringae pv. phaseolicola (strain 1448A / Race 6)).